The sequence spans 769 residues: Polymeric immunoglobulin receptor (769 aa).

Positions 1–18 are cleaved as a signal peptide; it reads MRLSLFALLVTVFSGVST. Residues 19 to 643 lie on the Extracellular side of the membrane; it reads QSPIFGPQDV…SAGGQSGSSK (625 aa). Residues 21–126 enclose the Ig-like V-type 1; required for binding to polymeric IgA and IgM domain; sequence PIFGPQDVSS…RGLFFDVSLE (106 aa). Residues cysteine 40 and cysteine 110 are joined by a disulfide bond. 3 N-linked (GlcNAc...) asparagine glycosylation sites follow: asparagine 90, asparagine 135, and asparagine 206. Ig-like V-type domains are found at residues 135-237, 240-341, 353-457, and 463-563; these read NDTH…DLQV, PEPE…VQAW, NSRS…LQVA, and PDLE…IYVA. Disulfide bonds link cysteine 152–cysteine 220, cysteine 257–cysteine 324, and cysteine 370–cysteine 440. N-linked (GlcNAc...) asparagine glycosylation is present at asparagine 471. A disulfide bond links cysteine 484 and cysteine 546. Disordered regions lie at residues 569–604 and 619–640; these read RGSP…NKAN and AGDQ…GQSG. Residues 595–604 are compositionally biased toward basic and acidic residues; that stretch reads SVREDENKAN. The helical transmembrane segment at 644–666 threads the bilayer; that stretch reads VLFSTLVPLGLVLAVGAVAVWVA. The Cytoplasmic segment spans residues 667-769; the sequence is RVRHRKNVDR…AQVHDGPQEA (103 aa). A phosphoserine mark is found at serine 678, serine 687, serine 694, and serine 740. The interval 719-741 is disordered; sequence EIETTTECTTEPEESKKAKRSSK. Over residues 731 to 741 the composition is skewed to basic and acidic residues; that stretch reads EESKKAKRSSK.

In terms of assembly, interacts (mainly via CDR1-like domain) with dimeric IgA. Interacts (mainly via CDR2-like domain) with pentameric IgM. Either free or part of the secretory IgA (sIgA) complex that consists of two, four or five IgA monomers, and two additional non-Ig polypeptides, namely the JCHAIN and the secretory component (the proteolytic product of PIGR). Free secretory component interacts with bacterial antigens toxA of C.difficile and eae of E.coli. In terms of processing, N-glycosylated. N-glycosylation is required for anchoring IgA molecules to mucus, but is not necessary for Ig binding.

It localises to the cell membrane. The protein resides in the secreted. Functionally, mediates selective transcytosis of polymeric IgA and IgM across mucosal epithelial cells. Binds polymeric IgA and IgM at the basolateral surface of epithelial cells. The complex is then transported across the cell to be secreted at the apical surface. During this process, a cleavage occurs that separates the extracellular (known as the secretory component) from the transmembrane segment. Through its N-linked glycans ensures anchoring of secretory IgA (sIgA) molecules to mucus lining the epithelial surface to neutralize extracellular pathogens. On its own (free form) may act as a non-specific microbial scavenger to prevent pathogen interaction with epithelial cells. In Rattus norvegicus (Rat), this protein is Polymeric immunoglobulin receptor (Pigr).